Here is a 663-residue protein sequence, read N- to C-terminus: Shugoshin 1 (663 aa).

Coiled coils occupy residues 8–29 (KQAF…RIKK) and 110–132 (DTAE…NLLE). Disordered regions lie at residues 207-250 (RNTA…MNKN), 278-401 (EHTV…LNSG), and 417-478 (FRQN…ARKN). Composition is skewed to basic and acidic residues over residues 231 to 242 (RLEECNNEDKTE), 280 to 304 (TVVE…REID), 339 to 358 (KNKE…KAER), and 366 to 394 (KPWE…KEKM). Residues 427-437 (NESSLEISSSE) are compositionally biased toward low complexity. Positions 443–453 (SLYKPYKDKSK) are enriched in basic and acidic residues.

The protein belongs to the shugoshin family. Binds microtubules. In terms of processing, ubiquitinated by the anaphase promoting complex (APC) at the onset of anaphase, conducting to its degradation.

Its subcellular location is the nucleus. The protein resides in the chromosome. It is found in the centromere. The protein localises to the kinetochore. It localises to the nucleus speckle. Plays a central role in chromosome cohesion during mitosis by preventing premature dissociation of cohesin complex from centromeres after prophase, when most of cohesin complex dissociates from chromosomes arms. May act by preventing phosphorylation of the stag2 subunit of cohesin complex at the centromere, ensuring cohesin persistence at centromere until cohesin cleavage by espl1/separase at anaphase. May regulate kinetochore microtubule stability in mitosis, possibly to sense tension on mitotic chromosomes. The protein is Shugoshin 1 of Xenopus laevis (African clawed frog).